The primary structure comprises 243 residues: MKNILSWMLMFAVALPIVGCDNGGGSQTSATEKSMVEDSALTDNQKLSRTFGHLLSRQLSRTEDFSLDLVEVIKGMQSEIDGQSAPLTDTEYEKQMAEVQKASFEAKCSENLASAEKFLKENKEKAGVIELEPNKLQYRVVKEGTGRVLSGKPTALLHYTGSFIDGKVFDSSEKNKEPILLPLTKVIPGFSQGMQGMKEGEVRVLYIHPDLAYGTAGQLPPNSLLIFEVKLIEANDDNVSVTE.

An N-terminal signal peptide occupies residues Met1 to Ala14. The region spanning Lys152 to Asn235 is the PPIase FKBP-type domain.

It belongs to the FKBP-type PPIase family.

It is found in the cell outer membrane. The enzyme catalyses [protein]-peptidylproline (omega=180) = [protein]-peptidylproline (omega=0). Functionally, PPIases accelerate the folding of proteins. The sequence is that of Peptidyl-prolyl cis-trans isomerase Mip (mip) from Chlamydia trachomatis serovar D (strain ATCC VR-885 / DSM 19411 / UW-3/Cx).